We begin with the raw amino-acid sequence, 1202 residues long: Calmodulin-binding transcription activator 2 (1202 aa).

Positions arginine 30–cysteine 155 form a DNA-binding region, CG-1. Residues arginine 79–lysine 86 carry the Nuclear localization signal motif. 3 disordered regions span residues serine 263–glycine 322, glycine 361–proline 409, and proline 421–glycine 491. Residues proline 270 to leucine 283 show a composition bias toward pro residues. Composition is skewed to low complexity over residues serine 289 to serine 299 and threonine 313 to glycine 322. Pro residues-rich tracts occupy residues serine 365–alanine 374 and proline 460–leucine 476. The 79-residue stretch at aspartate 537–arginine 615 folds into the IPT/TIG domain. ANK repeat units follow at residues methionine 712–glutamine 745, cysteine 757–aspartate 787, and arginine 791–proline 821. Disordered regions lie at residues proline 817–methionine 874 and proline 906–proline 929. Composition is skewed to low complexity over residues serine 826–serine 846 and proline 906–serine 917. IQ domains follow at residues tyrosine 1049 to isoleucine 1078 and threonine 1102 to isoleucine 1131.

This sequence belongs to the CAMTA family. May interact with calmodulin. Detected in brain. Expressed at constant levels throughout the cell cycle in neuroblastoma cell lines.

The protein resides in the nucleus. Its function is as follows. Transcription activator. May act as tumor suppressor. This chain is Calmodulin-binding transcription activator 2 (CAMTA2), found in Homo sapiens (Human).